The chain runs to 46 residues: uncharacterized protein (46 aa).

This is an uncharacterized protein from Haemophilus influenzae (strain ATCC 51907 / DSM 11121 / KW20 / Rd).